The sequence spans 584 residues: MLEKTCLEEKLDQQCSNVDNIKHTNVDIFKNESNSTVVSIPPKHSIRARKPSLHFLHSFASSGSLTYKNALRHKSCKLHLHKCKNPKKKYRQSGFRLASKGIPRSRCSKKAKKYLEDKKLMPISEVSLDPVISSNPLLRWWATSASNDSLLEELNNRFEQITNAWVQVSKDEAQNFVHKTEYTKGDHCEAASPLETCLLELEVSPVKMLFQKKYNLNELCTWFMQTTETQSLSLVRKANARNPLEVISTKGIKLGVKCCGFNASPFRKHFKKFAVSSPSKPAGKFHILHKMVGSPLLNVKSNLTLARLKRTEFKNLHCERWRREERPYSHRTVDWSSKRRNLRLFCQNPSWTNSEGQTNAETSLNGKGTVGNQWASPPEPRVTFAKKRVAVHDFRTHASLESKFNGTGGGQTDSEKEQIMESVSSHNWRSKTLKDCRIFLRKINCLEHRNTFKLNTIIYSPESVDSGGSQAQPEESKRFSLRSHSARQNSFKKQNEERANPKANSPASSRLTGELDSSHLSKHVNFDKNPDHSEALSKLSKRKRPPWKTTEMSAKRHKRQSCNSGQMANYCTKSQVGKLFSPSF.

Residues 353–375 (NSEGQTNAETSLNGKGTVGNQWA) show a composition bias toward polar residues. Disordered regions lie at residues 353–379 (NSEG…SPPE), 400–426 (LESK…VSSH), and 463–565 (SVDS…CNSG). Over residues 502 to 511 (KANSPASSRL) the composition is skewed to polar residues. Basic and acidic residues predominate over residues 516 to 535 (DSSHLSKHVNFDKNPDHSEA).

This is an uncharacterized protein from Mus musculus (Mouse).